The primary structure comprises 143 residues: Large-conductance mechanosensitive channel (143 aa).

3 consecutive transmembrane segments (helical) span residues 10-30, 40-60, and 86-106; these read FAIKGNMMDLAIGVIIGGAFG, IIMPLITVITGGGVDFSQKFI, and GNFLTILINFLILAWVVFLMV.

Belongs to the MscL family. In terms of assembly, homopentamer.

Its subcellular location is the cell inner membrane. Functionally, channel that opens in response to stretch forces in the membrane lipid bilayer. May participate in the regulation of osmotic pressure changes within the cell. This chain is Large-conductance mechanosensitive channel, found in Acinetobacter baumannii (strain ATCC 17978 / DSM 105126 / CIP 53.77 / LMG 1025 / NCDC KC755 / 5377).